The chain runs to 37 residues: Potassium channel toxin alpha-KTx 11.1 (37 aa).

Disulfide bonds link cysteine 8–cysteine 27, cysteine 13–cysteine 33, and cysteine 17–cysteine 35.

The protein belongs to the short scorpion toxin superfamily. Potassium channel inhibitor family. Alpha-KTx 11 subfamily. Expressed by the venom gland.

It is found in the secreted. Its function is as follows. Binds and inhibits voltage-sensitive potassium channels. Inhibits the vertebrate potassium channels Kv1.1/KCNA1, Kv1.2/KCNA2 and Kv1.3/KCNA3 with low affinity. Also weakly inhibits Kv7.1/KCNQ1 (10 uM of the toxin inhibits currents by 21.43%). This chain is Potassium channel toxin alpha-KTx 11.1, found in Parabuthus villosus (Black hairy thick-tailed scorpion).